The chain runs to 331 residues: 6-phosphogluconolactonase (331 aa).

It belongs to the cycloisomerase 2 family.

It catalyses the reaction 6-phospho-D-glucono-1,5-lactone + H2O = 6-phospho-D-gluconate + H(+). It participates in carbohydrate degradation; pentose phosphate pathway; D-ribulose 5-phosphate from D-glucose 6-phosphate (oxidative stage): step 2/3. Its function is as follows. Catalyzes the hydrolysis of 6-phosphogluconolactone to 6-phosphogluconate. The chain is 6-phosphogluconolactonase from Salmonella choleraesuis (strain SC-B67).